The chain runs to 502 residues: Nondiscriminating glutamyl-tRNA synthetase EARS2, mitochondrial (502 aa).

The transit peptide at 1 to 20 (MAGMLREVCGAAASGLRVRF) directs the protein to the mitochondrion. L-glutamate is bound at residue 19 to 21 (RFG). Residues 24-32 (PTGFLHLGG) carry the 'HIGH' region motif. His29 lines the ATP pocket. L-glutamate contacts are provided by residues Glu55, 207–211 (YHLAN), and Arg225. ATP is bound by residues Glu228 and 263 to 267 (KLSKR). The 'KMSKS' region motif lies at 263–267 (KLSKR).

Belongs to the class-I aminoacyl-tRNA synthetase family. Glutamate--tRNA ligase type 1 subfamily.

The protein resides in the mitochondrion matrix. It catalyses the reaction tRNA(Glx) + L-glutamate + ATP = L-glutamyl-tRNA(Glx) + AMP + diphosphate. The catalysed reaction is tRNA(Glu) + L-glutamate + ATP = L-glutamyl-tRNA(Glu) + AMP + diphosphate. It carries out the reaction tRNA(Gln) + L-glutamate + ATP = L-glutamyl-tRNA(Gln) + AMP + diphosphate. Non-discriminating glutamyl-tRNA synthetase that catalyzes aminoacylation of both mitochondrial tRNA(Glu) and tRNA(Gln) and participates in RNA aminoacylation for mitochondrial protein translation. Attachs glutamate to tRNA(Glu) or tRNA(Gln) in a two-step reaction: glutamate is first activated by ATP to form Glu-AMP and then transferred to the acceptor end of tRNA(Glu) or tRNA(Gln). This Gallus gallus (Chicken) protein is Nondiscriminating glutamyl-tRNA synthetase EARS2, mitochondrial.